A 506-amino-acid polypeptide reads, in one-letter code: 2,3-bisphosphoglycerate-independent phosphoglycerate mutase (506 aa).

The Mn(2+) site is built by Asp13 and Ser63. The active-site Phosphoserine intermediate is Ser63. Residues His124, 153–154 (RD), Arg183, Arg189, 254–257 (RADR), and Lys330 each bind substrate. 5 residues coordinate Mn(2+): Asp396, His400, Asp437, His438, and His456.

The protein belongs to the BPG-independent phosphoglycerate mutase family. As to quaternary structure, monomer. It depends on Mn(2+) as a cofactor.

It carries out the reaction (2R)-2-phosphoglycerate = (2R)-3-phosphoglycerate. It participates in carbohydrate degradation; glycolysis; pyruvate from D-glyceraldehyde 3-phosphate: step 3/5. Catalyzes the interconversion of 2-phosphoglycerate and 3-phosphoglycerate. This is 2,3-bisphosphoglycerate-independent phosphoglycerate mutase from Cereibacter sphaeroides (strain KD131 / KCTC 12085) (Rhodobacter sphaeroides).